Reading from the N-terminus, the 115-residue chain is Aspartate 1-decarboxylase (115 aa).

S25 acts as the Schiff-base intermediate with substrate; via pyruvic acid in catalysis. S25 bears the Pyruvic acid (Ser) mark. Position 57 (T57) interacts with substrate. Catalysis depends on Y58, which acts as the Proton donor. Substrate is bound at residue 73-75 (GAA).

This sequence belongs to the PanD family. As to quaternary structure, heterooctamer of four alpha and four beta subunits. The cofactor is pyruvate. In terms of processing, is synthesized initially as an inactive proenzyme, which is activated by self-cleavage at a specific serine bond to produce a beta-subunit with a hydroxyl group at its C-terminus and an alpha-subunit with a pyruvoyl group at its N-terminus.

Its subcellular location is the cytoplasm. It catalyses the reaction L-aspartate + H(+) = beta-alanine + CO2. It functions in the pathway cofactor biosynthesis; (R)-pantothenate biosynthesis; beta-alanine from L-aspartate: step 1/1. In terms of biological role, catalyzes the pyruvoyl-dependent decarboxylation of aspartate to produce beta-alanine. The protein is Aspartate 1-decarboxylase of Kosmotoga olearia (strain ATCC BAA-1733 / DSM 21960 / TBF 19.5.1).